The sequence spans 66 residues: Toxin BeM14 (66 aa).

The region spanning 2-66 (RDAYIADDRN…IRKIPGEECR (65 aa)) is the LCN-type CS-alpha/beta domain. 4 cysteine pairs are disulfide-bonded: Cys12–Cys65, Cys16–Cys36, Cys22–Cys46, and Cys26–Cys48.

Belongs to the long (4 C-C) scorpion toxin superfamily. Sodium channel inhibitor family. Alpha subfamily. Expressed by the venom gland.

It is found in the secreted. In terms of biological role, alpha toxins bind voltage-independently at site-3 of sodium channels (Nav) and inhibit the inactivation of the activated channels, thereby blocking neuronal transmission. Has paralytic activity in mice. The sequence is that of Toxin BeM14 from Mesobuthus eupeus (Lesser Asian scorpion).